We begin with the raw amino-acid sequence, 104 residues long: DNA-directed RNA polymerase subunit Rpo13 (104 aa).

2 disordered regions span residues 1–34 and 76–104; these read MVSG…EEFP and EKRD…SVEG. Residues 7–31 are compositionally biased toward acidic residues; the sequence is TEEEKEGTNDEEVSEEREVEETSEE. Glutamate 32 contacts DNA. The span at 80–104 shows a compositional bias: basic residues; it reads SRRKAKKAASKKVKKTKKKEKSVEG. The tract at residues 81 to 104 is required to bind DNA; the sequence is RRKAKKAASKKVKKTKKKEKSVEG.

Belongs to the archaeal Rpo13 RNA polymerase subunit family. In terms of assembly, part of the 13-subunit RNA polymerase complex. Rpo1N and Rpo5 form a cleft which docks Rpo13. Forms predominantly dimers in solution, although monomers and trimers can also be seen. Found associated with RNAP but also as a homodimer pool in the cytoplasm in vivo.

It is found in the cytoplasm. It carries out the reaction RNA(n) + a ribonucleoside 5'-triphosphate = RNA(n+1) + diphosphate. Its function is as follows. DNA-dependent RNA polymerase (RNAP) catalyzes the transcription of DNA into RNA using the four ribonucleoside triphosphates as substrates. A molten-globule protein, it binds dsDNA in the RNAP, in vitro binds dsDNA but not ssDNA. Its position in RNAP implies it functions in both transcription initiation and elongation. The protein is DNA-directed RNA polymerase subunit Rpo13 of Saccharolobus shibatae (strain ATCC 51178 / DSM 5389 / JCM 8931 / NBRC 15437 / B12) (Sulfolobus shibatae).